The chain runs to 140 residues: Vacuolar protein sorting-associated protein 55 homolog (140 aa).

Over 1–16 the chain is Cytoplasmic; that stretch reads MADVPGYLRTCLDMGK. A helical membrane pass occupies residues 17 to 37; it reads IAFLAILVSTGIVLQILACAL. Over 38-40 the chain is Lumenal; it reads FNN. A helical membrane pass occupies residues 41–61; sequence WWPMLSVIMYVLLPMPLLFFG. Residues 62–75 lie on the Cytoplasmic side of the membrane; it reads GSDSTSLFNESDNS. Residues 76–98 form a helical membrane-spanning segment; sequence WINAAKFLTGASAVGSVAIPSIL. The Lumenal portion of the chain corresponds to 99–108; sequence KHAGLIGWGA. A helical membrane pass occupies residues 109–129; sequence LALDLSSYVVFLVAILGYICI. The Cytoplasmic portion of the chain corresponds to 130-140; that stretch reads GDASDNYYSYI.

This sequence belongs to the OB-RGRP/VPS55 family.

It is found in the endosome membrane. Its function is as follows. Involved in endosomal protein transport. This Arabidopsis thaliana (Mouse-ear cress) protein is Vacuolar protein sorting-associated protein 55 homolog.